The following is a 138-amino-acid chain: Superoxide dismutase [Mn] (138 aa).

H1, H49, D133, and H137 together coordinate Mn(2+).

It belongs to the iron/manganese superoxide dismutase family. The cofactor is Mn(2+).

The enzyme catalyses 2 superoxide + 2 H(+) = H2O2 + O2. Destroys superoxide anion radicals which are normally produced within the cells and which are toxic to biological systems. In Mycobacterium malmoense, this protein is Superoxide dismutase [Mn] (sodA).